A 186-amino-acid chain; its full sequence is Large ribosomal subunit protein uL5 (186 aa).

The protein belongs to the universal ribosomal protein uL5 family. Part of the 50S ribosomal subunit; part of the 5S rRNA/L5/L18/L25 subcomplex. Contacts the 5S rRNA and the P site tRNA. Forms a bridge to the 30S subunit in the 70S ribosome.

Functionally, this is one of the proteins that bind and probably mediate the attachment of the 5S RNA into the large ribosomal subunit, where it forms part of the central protuberance. In the 70S ribosome it contacts protein S13 of the 30S subunit (bridge B1b), connecting the 2 subunits; this bridge is implicated in subunit movement. Contacts the P site tRNA; the 5S rRNA and some of its associated proteins might help stabilize positioning of ribosome-bound tRNAs. The polypeptide is Large ribosomal subunit protein uL5 (Maricaulis maris (strain MCS10) (Caulobacter maris)).